The chain runs to 432 residues: Glutamyl-tRNA reductase (432 aa).

Substrate-binding positions include 49-52, S101, 106-108, and Q112; these read TCNR and ESQ. C50 (nucleophile) is an active-site residue. 181–186 serves as a coordination point for NADP(+); the sequence is GAGETI. Residues 410-432 form a disordered region; it reads KPGYHHPTLQTTIVKTDETDPAS.

Belongs to the glutamyl-tRNA reductase family. Homodimer.

The catalysed reaction is (S)-4-amino-5-oxopentanoate + tRNA(Glu) + NADP(+) = L-glutamyl-tRNA(Glu) + NADPH + H(+). Its pathway is porphyrin-containing compound metabolism; protoporphyrin-IX biosynthesis; 5-aminolevulinate from L-glutamyl-tRNA(Glu): step 1/2. Functionally, catalyzes the NADPH-dependent reduction of glutamyl-tRNA(Glu) to glutamate 1-semialdehyde (GSA). The chain is Glutamyl-tRNA reductase from Xylella fastidiosa (strain M23).